Reading from the N-terminus, the 252-residue chain is Adenylate kinase (252 aa).

Residue 47–52 (GSGKGT) coordinates ATP. The tract at residues 67 to 96 (ATGDMLRSQVKQGTPLGLEAKKIMDQGGLV) is NMP. AMP-binding positions include threonine 68, arginine 73, 94-96 (GLV), 123-126 (GFPR), and glutamine 130. The LID stretch occupies residues 164–201 (GRLVHPASGRSYHKIFSPPKKEMTDDITGEPLVQRSDD). ATP contacts are provided by residues arginine 165 and 174–175 (SY). AMP contacts are provided by arginine 198 and arginine 209. Glutamine 237 provides a ligand contact to ATP.

It belongs to the adenylate kinase family. AK2 subfamily. In terms of assembly, monomer.

Its subcellular location is the cytoplasm. It localises to the cytosol. The protein localises to the mitochondrion intermembrane space. It catalyses the reaction AMP + ATP = 2 ADP. Its function is as follows. Catalyzes the reversible transfer of the terminal phosphate group between ATP and AMP. Plays an important role in cellular energy homeostasis and in adenine nucleotide metabolism. Adenylate kinase activity is critical for regulation of the phosphate utilization and the AMP de novo biosynthesis pathways. In Lodderomyces elongisporus (strain ATCC 11503 / CBS 2605 / JCM 1781 / NBRC 1676 / NRRL YB-4239) (Yeast), this protein is Adenylate kinase.